The primary structure comprises 72 residues: Conotoxin Gla(2)-TxVI/B (72 aa).

Positions 1 to 19 are cleaved as a signal peptide; that stretch reads MEKLIILLLVAAVLMSTQA. Residues 20–44 constitute a propeptide that is removed on maturation; it reads LFQEKRTMKKIDFLSKGKADAEKQR. Cystine bridges form between cysteine 48–cysteine 62, cysteine 55–cysteine 66, and cysteine 61–cysteine 70. Glutamate 56 bears the 4-carboxyglutamate mark. A 4-hydroxyproline modification is found at proline 58. Serine amide is present on serine 71.

Post-translationally, brominated at one of the Trp residues. In terms of tissue distribution, expressed by the venom duct.

It localises to the secreted. The protein is Conotoxin Gla(2)-TxVI/B of Conus textile (Cloth-of-gold cone).